A 174-amino-acid chain; its full sequence is Small t antigen (174 aa).

Met-1 is modified (N-acetylmethionine; by host). One can recognise a J domain in the interval Gln-12–Gly-75. Residues Cys-103–Cys-116 form a C4-type; atypical zinc finger. The H1C3-type; atypical zinc-finger motif lies at His-122 to Cys-143.

In terms of assembly, interacts with host PPP2R1A; the interaction inhibits PP2A activity.

The protein resides in the host cytoplasm. It is found in the host nucleus. Functionally, promotes efficient viral genome replication by accelerating both G1 and S phase progression of the cell cycle. Inhibits host PP2A by binding to the A subunit, thereby displacing lower affinity regulatory B subunit. Inactivation of PP2A in turn results in the transactivation of cyclin A and cyclin D1 promoters. Late during the infection cycle, ST may induce dephosphorylation of host eIF4E-binding protein EIF4EBP1 leading to the inhibition of cap-dependent translation. May establish and maintain high levels of viral genomes during persistent infection in cell culture. This is Small t antigen from Simian virus 40 (SV40).